A 347-amino-acid polypeptide reads, in one-letter code: Probable dual-specificity RNA methyltransferase RlmN (347 aa).

Glutamate 90 acts as the Proton acceptor in catalysis. In terms of domain architecture, Radical SAM core spans 96 to 326 (YKHGNSICIS…VTVRREMGSD (231 aa)). Cysteine 103 and cysteine 331 are disulfide-bonded. Residues cysteine 110, cysteine 114, and cysteine 117 each contribute to the [4Fe-4S] cluster site. Residues 157-158 (GE), serine 189, 212-214 (SLH), and asparagine 288 each bind S-adenosyl-L-methionine. Cysteine 331 acts as the S-methylcysteine intermediate in catalysis.

This sequence belongs to the radical SAM superfamily. RlmN family. Requires [4Fe-4S] cluster as cofactor.

Its subcellular location is the cytoplasm. The catalysed reaction is adenosine(2503) in 23S rRNA + 2 reduced [2Fe-2S]-[ferredoxin] + 2 S-adenosyl-L-methionine = 2-methyladenosine(2503) in 23S rRNA + 5'-deoxyadenosine + L-methionine + 2 oxidized [2Fe-2S]-[ferredoxin] + S-adenosyl-L-homocysteine. The enzyme catalyses adenosine(37) in tRNA + 2 reduced [2Fe-2S]-[ferredoxin] + 2 S-adenosyl-L-methionine = 2-methyladenosine(37) in tRNA + 5'-deoxyadenosine + L-methionine + 2 oxidized [2Fe-2S]-[ferredoxin] + S-adenosyl-L-homocysteine. Functionally, specifically methylates position 2 of adenine 2503 in 23S rRNA and position 2 of adenine 37 in tRNAs. The sequence is that of Probable dual-specificity RNA methyltransferase RlmN from Clostridium botulinum (strain Alaska E43 / Type E3).